Here is a 125-residue protein sequence, read N- to C-terminus: Small ribosomal subunit protein uS12m (125 aa).

This sequence belongs to the universal ribosomal protein uS12 family.

Its subcellular location is the mitochondrion. In terms of biological role, protein S12 is involved in the translation initiation step. The chain is Small ribosomal subunit protein uS12m (RPS12) from Helianthus annuus (Common sunflower).